Here is a 321-residue protein sequence, read N- to C-terminus: Protein ABIL3 (321 aa).

2 disordered regions span residues Thr-179–Ser-273 and Glu-279–Leu-298. Composition is skewed to low complexity over residues Ser-204–Ala-215 and Ile-240–Arg-255. Over residues Glu-279–His-288 the composition is skewed to basic and acidic residues.

It belongs to the ABI family. Binds SCAR.

The protein localises to the cytoplasm. It localises to the cytoskeleton. Functionally, involved in regulation of actin and microtubule organization. Part of a WAVE complex that activates the Arp2/3 complex. The protein is Protein ABIL3 (ABIL3) of Arabidopsis thaliana (Mouse-ear cress).